The following is a 360-amino-acid chain: Holliday junction branch migration complex subunit RuvB (360 aa).

The interval 1-46 is disordered; that stretch reads MAIKRSGNSDRPAKNPSSTPGTNAPTLLSPTPTHQEKETSEEKIRP. Positions 13–205 are large ATPase domain (RuvB-L); that stretch reads AKNPSSTPGT…FGLIQRLRFY (193 aa). A compositionally biased stretch (polar residues) spans 15 to 33; the sequence is NPSSTPGTNAPTLLSPTPT. A compositionally biased stretch (basic and acidic residues) spans 34 to 46; the sequence is HQEKETSEEKIRP. ATP is bound by residues isoleucine 44, arginine 45, glycine 86, lysine 89, threonine 90, threonine 91, 152 to 154, arginine 195, tyrosine 205, and arginine 242; that span reads EDY. Threonine 90 serves as a coordination point for Mg(2+). The interval 206–276 is small ATPAse domain (RuvB-S); it reads EVDELTLIVL…LASEALDIYQ (71 aa). The interval 279-360 is head domain (RuvB-H); it reads KQGLDWIDRL…LTSEEQLSIF (82 aa). DNA contacts are provided by arginine 334 and arginine 339.

The protein belongs to the RuvB family. As to quaternary structure, homohexamer. Forms an RuvA(8)-RuvB(12)-Holliday junction (HJ) complex. HJ DNA is sandwiched between 2 RuvA tetramers; dsDNA enters through RuvA and exits via RuvB. An RuvB hexamer assembles on each DNA strand where it exits the tetramer. Each RuvB hexamer is contacted by two RuvA subunits (via domain III) on 2 adjacent RuvB subunits; this complex drives branch migration. In the full resolvosome a probable DNA-RuvA(4)-RuvB(12)-RuvC(2) complex forms which resolves the HJ.

Its subcellular location is the cytoplasm. It carries out the reaction ATP + H2O = ADP + phosphate + H(+). Its function is as follows. The RuvA-RuvB-RuvC complex processes Holliday junction (HJ) DNA during genetic recombination and DNA repair, while the RuvA-RuvB complex plays an important role in the rescue of blocked DNA replication forks via replication fork reversal (RFR). RuvA specifically binds to HJ cruciform DNA, conferring on it an open structure. The RuvB hexamer acts as an ATP-dependent pump, pulling dsDNA into and through the RuvAB complex. RuvB forms 2 homohexamers on either side of HJ DNA bound by 1 or 2 RuvA tetramers; 4 subunits per hexamer contact DNA at a time. Coordinated motions by a converter formed by DNA-disengaged RuvB subunits stimulates ATP hydrolysis and nucleotide exchange. Immobilization of the converter enables RuvB to convert the ATP-contained energy into a lever motion, pulling 2 nucleotides of DNA out of the RuvA tetramer per ATP hydrolyzed, thus driving DNA branch migration. The RuvB motors rotate together with the DNA substrate, which together with the progressing nucleotide cycle form the mechanistic basis for DNA recombination by continuous HJ branch migration. Branch migration allows RuvC to scan DNA until it finds its consensus sequence, where it cleaves and resolves cruciform DNA. This chain is Holliday junction branch migration complex subunit RuvB, found in Rippkaea orientalis (strain PCC 8801 / RF-1) (Cyanothece sp. (strain PCC 8801)).